Here is a 719-residue protein sequence, read N- to C-terminus: Photosystem I P700 chlorophyll a apoprotein A1 (719 aa).

A run of 8 helical transmembrane segments spans residues 61 to 84 (VFSAHFGQLAIIFIWLSGMYFHGA), 147 to 170 (LYCTATGALIFAALMLFAGWFHYH), 186 to 210 (LNHHLAGLLGLGSLGWAGHQVHVSL), 282 to 300 (TAHHHLAIAILFLIAGHMY), 337 to 360 (WHAQLALNLAMLGSLTIVVAHHMY), 376 to 402 (LSLFTHHMWIGGFLIVGAAAHAAIFMV), 424 to 446 (AIVSHLNWACIFLGFHSFGLYIH), and 522 to 540 (FLVHHIHAFTIHVTVLILL). Residues C564 and C573 each coordinate [4Fe-4S] cluster. The next 2 helical transmembrane spans lie at 580–601 (HVFLGLFWMYNAISVVIFHFSW) and 655–677 (LSAYGLFFLGAHFVWAFSLMFLF). H666 contacts chlorophyll a'. Chlorophyll a contacts are provided by M674 and Y682. Residue W683 coordinates phylloquinone. A helical transmembrane segment spans residues 715-719 (AVGVA).

It belongs to the PsaA/PsaB family. In terms of assembly, the PsaA/B heterodimer binds the P700 chlorophyll special pair and subsequent electron acceptors. PSI consists of a core antenna complex that captures photons, and an electron transfer chain that converts photonic excitation into a charge separation. The eukaryotic PSI reaction center is composed of at least 11 subunits. The cofactor is P700 is a chlorophyll a/chlorophyll a' dimer, A0 is one or more chlorophyll a, A1 is one or both phylloquinones and FX is a shared 4Fe-4S iron-sulfur center..

The protein localises to the plastid. Its subcellular location is the chloroplast thylakoid membrane. The catalysed reaction is reduced [plastocyanin] + hnu + oxidized [2Fe-2S]-[ferredoxin] = oxidized [plastocyanin] + reduced [2Fe-2S]-[ferredoxin]. PsaA and PsaB bind P700, the primary electron donor of photosystem I (PSI), as well as the electron acceptors A0, A1 and FX. PSI is a plastocyanin-ferredoxin oxidoreductase, converting photonic excitation into a charge separation, which transfers an electron from the donor P700 chlorophyll pair to the spectroscopically characterized acceptors A0, A1, FX, FA and FB in turn. Oxidized P700 is reduced on the lumenal side of the thylakoid membrane by plastocyanin. This Torreya californica (California nutmeg) protein is Photosystem I P700 chlorophyll a apoprotein A1.